A 241-amino-acid polypeptide reads, in one-letter code: DNA repair protein RecO (241 aa).

It belongs to the RecO family.

Involved in DNA repair and RecF pathway recombination. The protein is DNA repair protein RecO of Yersinia enterocolitica serotype O:8 / biotype 1B (strain NCTC 13174 / 8081).